A 430-amino-acid polypeptide reads, in one-letter code: Histidine--tRNA ligase, chloroplastic (430 aa).

Belongs to the class-II aminoacyl-tRNA synthetase family.

Its subcellular location is the plastid. The protein resides in the chloroplast. It carries out the reaction tRNA(His) + L-histidine + ATP = L-histidyl-tRNA(His) + AMP + diphosphate + H(+). The protein is Histidine--tRNA ligase, chloroplastic (hisS) of Porphyra purpurea (Red seaweed).